Here is an 84-residue protein sequence, read N- to C-terminus: MAHKKGGGSTKNGRDSNPKYLGVKAAGGSVVNAGTIILRQRGTAIKPGNNAGLGRDHTIFALVDGTVHFRNGRNNKKRVDIIPS.

The disordered stretch occupies residues 1 to 20; the sequence is MAHKKGGGSTKNGRDSNPKY.

This sequence belongs to the bacterial ribosomal protein bL27 family.

This is Large ribosomal subunit protein bL27 from Chlorobaculum tepidum (strain ATCC 49652 / DSM 12025 / NBRC 103806 / TLS) (Chlorobium tepidum).